The chain runs to 552 residues: Leucine-rich repeat-containing protein 31 (552 aa).

The tract at residues 1–65 is disordered; the sequence is MSQTRKKTSS…SETAKPLSSE (65 aa). The segment covering 31 to 41 has biased composition (basic and acidic residues); the sequence is ESRKEDNDLKT. Over residues 42-58 the composition is skewed to polar residues; that stretch reads SDSQPSDWIQKTATSET. 9 LRR repeats span residues 227-246, 255-275, 283-293, 311-331, 339-360, 367-387, 395-415, 423-443, and 453-475; these read SLEVLDLSINRDIVGSLNSI, NLKVLKLHSCGLSQKSVKILD, ELRKLDLSCNK, HLQVLDLHQCSLTADDVMSLT, NLQELDLSANKKMGSSSENLLS, ALKSLVINNCALESETFTALA, ALEVFNLSWNKCVGGNLKLLL, SLQVLRLSSCSLVTEDVALLA, and KLQKLDLSYNDSICDAGWTMFCQ.

The protein is Leucine-rich repeat-containing protein 31 (LRRC31) of Homo sapiens (Human).